A 352-amino-acid chain; its full sequence is Sodium-lithium/proton antiporter (352 aa).

8 helical membrane passes run 11 to 31 (ILLL…PVSV), 32 to 52 (PLII…WMQF), 61 to 81 (AVTI…TYAV), 159 to 179 (IPEY…FMLE), 216 to 236 (AQFL…FWIT), 241 to 261 (IVMS…SIVI), 271 to 291 (IVGD…LLAI), and 317 to 337 (IGLQ…VIAF).

Belongs to the autoinducer-2 exporter (AI-2E) (TC 2.A.86) family.

Its subcellular location is the cell membrane. Its function is as follows. Catalyzes the pH-dependent efflux of sodium and lithium in exchange for external protons. This is Sodium-lithium/proton antiporter from Halobacillus andaensis.